We begin with the raw amino-acid sequence, 270 residues long: tRNA pseudouridine synthase A (270 aa).

Aspartate 51 serves as the catalytic Nucleophile. Tyrosine 109 serves as a coordination point for substrate.

This sequence belongs to the tRNA pseudouridine synthase TruA family. Homodimer.

It catalyses the reaction uridine(38/39/40) in tRNA = pseudouridine(38/39/40) in tRNA. Formation of pseudouridine at positions 38, 39 and 40 in the anticodon stem and loop of transfer RNAs. In Burkholderia mallei (strain ATCC 23344), this protein is tRNA pseudouridine synthase A.